Here is a 175-residue protein sequence, read N- to C-terminus: Universal stress protein A-like protein (175 aa).

11 residues coordinate AMP: Ala11, Val12, Asn13, Ser26, Cys27, Val53, Gly131, Arg133, Thr145, Val146, and Ser147.

Belongs to the universal stress protein A family. Homohexamer.

In Arabidopsis thaliana (Mouse-ear cress), this protein is Universal stress protein A-like protein.